Consider the following 142-residue polypeptide: Large ribosomal subunit protein uL13 (142 aa).

Belongs to the universal ribosomal protein uL13 family. Part of the 50S ribosomal subunit.

This protein is one of the early assembly proteins of the 50S ribosomal subunit, although it is not seen to bind rRNA by itself. It is important during the early stages of 50S assembly. The sequence is that of Large ribosomal subunit protein uL13 from Ralstonia pickettii (strain 12J).